A 468-amino-acid chain; its full sequence is WD repeat-containing protein 55 homolog (468 aa).

Residues 1–107 (MRNFNSPKFG…VPKRVIDDYD (107 aa)) form a disordered region. Composition is skewed to acidic residues over residues 15–26 (DDSDDDDFDSGT), 41–58 (PITE…EYNP), and 67–91 (SDDE…DGED). 6 WD repeats span residues 134–173 (KTED…CTIV), 178–217 (THTK…LKRF), 221–259 (AHEE…PVFK), 262–301 (EVED…MYVQ), 304–343 (PYEE…YHCD), and 388–427 (QHSL…EFDD).

This sequence belongs to the WD repeat WDR55 family.

The sequence is that of WD repeat-containing protein 55 homolog from Aedes aegypti (Yellowfever mosquito).